The sequence spans 485 residues: GlcNAc-binding protein A (485 aa).

The first 29 residues, 1–29 (MKKQPQKTLLAIALSVVSGTAMSHGYVSA), serve as a signal peptide directing secretion. One can recognise a Chitin-binding type-4 domain in the interval 30–200 (VENGVAEARV…SFYNVIDVKF (171 aa)). One can recognise a Chitin-binding type-3 domain in the interval 437-478 (ADTKVLASDGAIYQCKPFPYSGYCVQWTPTATQYQPGTGSHW).

It belongs to the GbpA family.

The protein resides in the secreted. In terms of biological role, probably interacts with GlcNAc residues. May promote attachment to both epithelial cell surfaces and chitin. In Vibrio vulnificus (strain CMCP6), this protein is GlcNAc-binding protein A.